We begin with the raw amino-acid sequence, 739 residues long: MNIIAIMNDLSAYFKEEPLRELHQELEKEGFRIAYPKDRNDLLKLIENNSRLCGVIFDWDKYNLELSAEISELNKLLPIYAFANTYSTLDVNMSDLRLNVRFFEYALGSAQDIATKIRQSTDQYIDTILPPLTKALFKYVKEEKYTVCTPGHMGGTAFDKSPVGSLFYDFFGENTMRSDISISVSELGSLLDHSGPHRDAEEYIARTFNADRSYIVTNGTSTANKIVGMYSSPAGATILIDRNCHKSLTHLMMMSNVVPVYLRPTRNAYGILGGIPQSEFTRASIEEKVKNTPNATWPVHAVVTNSTYDGLFYNTEYIKNTLDVKSIHFDSAWVPYTNFHPIYQGKAGMSGERVPGKIIYETQSTHKLLAAFSQASMIHVKGEINEETFNEAYMMHTSTSPHYGIVASTETAAAMMKGNAGKRLINGSIERAIRFRKEIRRLRTESDGWFFDVWQPDNIDEVACWPLNPRNEWHGFPNIDNDHMYLDPIKVTLLTPGLSPNGTLEEEGIPASIVSKYLDEHGIIVEKTGPYNLLFLFSIGIDKTKALSLLRALTDFKRVYDLNLRVKNVLPSLYNEAPDFYKEMRIQELAQGIHALVKHHNLPDLMYRAFEVLPKLVMTPHDAFQEEVRGNIEPCALDDMLGKVSANMILPYPPGVPVVMPGEMLTKESRPVLSFLQMLCEIGAHYPGFETDIHGVHRDGATGKYMVVVLKQGADEPGDKPSDTVKKAPGKKPSAAKKS.

At Lys367 the chain carries N6-(pyridoxal phosphate)lysine. A compositionally biased stretch (basic and acidic residues) spans 714–726 (ADEPGDKPSDTVK). Positions 714 to 739 (ADEPGDKPSDTVKKAPGKKPSAAKKS) are disordered. Over residues 728 to 739 (APGKKPSAAKKS) the composition is skewed to basic residues.

It belongs to the Orn/Lys/Arg decarboxylase class-I family. It depends on pyridoxal 5'-phosphate as a cofactor.

Its subcellular location is the cytoplasm. The catalysed reaction is L-lysine + H(+) = cadaverine + CO2. This chain is Lysine decarboxylase, found in Hafnia alvei.